The primary structure comprises 256 residues: Ribonuclease 3 (256 aa).

In terms of domain architecture, RNase III spans Leu-3–Gly-125. Glu-38 serves as a coordination point for Mg(2+). The active site involves Asp-42. Mg(2+) is bound by residues Asp-111 and Glu-114. Residue Glu-114 is part of the active site. In terms of domain architecture, DRBM spans Asp-152 to Arg-222. Positions Gln-226 to Glu-256 are disordered.

Belongs to the ribonuclease III family. In terms of assembly, homodimer. Requires Mg(2+) as cofactor.

The protein resides in the cytoplasm. It carries out the reaction Endonucleolytic cleavage to 5'-phosphomonoester.. In terms of biological role, digests double-stranded RNA. Involved in the processing of primary rRNA transcript to yield the immediate precursors to the large and small rRNAs (23S and 16S). Processes some mRNAs, and tRNAs when they are encoded in the rRNA operon. Processes pre-crRNA and tracrRNA of type II CRISPR loci if present in the organism. In Ralstonia pickettii (strain 12J), this protein is Ribonuclease 3.